The chain runs to 441 residues: Hydroxycinnamoyl-CoA:5-hydroxyanthranilate N-hydroxycinnamoyltransferase HHT1 (441 aa).

Catalysis depends on proton acceptor residues His-158 and Asp-388.

The protein belongs to the plant acyltransferase family.

It catalyses the reaction 5-hydroxyanthranilate + (E)-4-coumaroyl-CoA = avenanthramide A + CoA. It carries out the reaction 5-hydroxyanthranilate + (E)-caffeoyl-CoA = avenanthramide C + CoA. In terms of biological role, involved in the biosynthesis of avenanthramide phytoalexins, which are phenolic alkaloids found mainly in oats. Catalyzes the N-acylation of 5-hydroxyanthranilate with 4-coumaroyl-CoA or caffeoyl-CoA as acyl donors, forming avenanthramide A and avenanthramide C, respectively. Does not accept feruloyl-CoA as a substrate. The polypeptide is Hydroxycinnamoyl-CoA:5-hydroxyanthranilate N-hydroxycinnamoyltransferase HHT1 (Avena sativa (Oat)).